Consider the following 122-residue polypeptide: Large ribosomal subunit protein bL19c (122 aa).

The protein belongs to the bacterial ribosomal protein bL19 family.

The protein resides in the plastid. The protein localises to the chloroplast. This chain is Large ribosomal subunit protein bL19c, found in Gracilaria tenuistipitata var. liui (Red alga).